The following is a 137-amino-acid chain: MFANIGWGEMLILVIAGLVILGPERLPGAIRWTSNALRQARDYVSGATTQLRQDFGPEFEDLREPITELQKLRGMTPRAALTKHLLDGDDSFFTGKFDQQNGKPAAGQEKPVTPVNPPVTATPPSESTATPFDSDAT.

A helical transmembrane segment spans residues 2-22 (FANIGWGEMLILVIAGLVILG). The tract at residues 92-137 (FFTGKFDQQNGKPAAGQEKPVTPVNPPVTATPPSESTATPFDSDAT) is disordered. Low complexity predominate over residues 122 to 131 (TPPSESTATP).

Belongs to the TatB family. The Tat system comprises two distinct complexes: a TatABC complex, containing multiple copies of TatA, TatB and TatC subunits, and a separate TatA complex, containing only TatA subunits. Substrates initially bind to the TatABC complex, which probably triggers association of the separate TatA complex to form the active translocon.

The protein resides in the cell membrane. Part of the twin-arginine translocation (Tat) system that transports large folded proteins containing a characteristic twin-arginine motif in their signal peptide across membranes. Together with TatC, TatB is part of a receptor directly interacting with Tat signal peptides. TatB may form an oligomeric binding site that transiently accommodates folded Tat precursor proteins before their translocation. This chain is Sec-independent protein translocase protein TatB, found in Mycobacterium sp. (strain JLS).